Reading from the N-terminus, the 274-residue chain is Formamidopyrimidine-DNA glycosylase (274 aa).

The active-site Schiff-base intermediate with DNA is Pro-2. Glu-3 (proton donor) is an active-site residue. The Proton donor; for beta-elimination activity role is filled by Lys-56. DNA contacts are provided by His-89, Arg-107, and Lys-148. The segment at 233–267 (LAYGRAREMCVNCETTLENLKLGQRASVFCPQCQP) adopts an FPG-type zinc-finger fold. The Proton donor; for delta-elimination activity role is filled by Arg-257.

Belongs to the FPG family. Monomer. The cofactor is Zn(2+).

The catalysed reaction is Hydrolysis of DNA containing ring-opened 7-methylguanine residues, releasing 2,6-diamino-4-hydroxy-5-(N-methyl)formamidopyrimidine.. It carries out the reaction 2'-deoxyribonucleotide-(2'-deoxyribose 5'-phosphate)-2'-deoxyribonucleotide-DNA = a 3'-end 2'-deoxyribonucleotide-(2,3-dehydro-2,3-deoxyribose 5'-phosphate)-DNA + a 5'-end 5'-phospho-2'-deoxyribonucleoside-DNA + H(+). Its function is as follows. Involved in base excision repair of DNA damaged by oxidation or by mutagenic agents. Acts as a DNA glycosylase that recognizes and removes damaged bases. Has a preference for oxidized purines, such as 7,8-dihydro-8-oxoguanine (8-oxoG). Has AP (apurinic/apyrimidinic) lyase activity and introduces nicks in the DNA strand. Cleaves the DNA backbone by beta-delta elimination to generate a single-strand break at the site of the removed base with both 3'- and 5'-phosphates. The sequence is that of Formamidopyrimidine-DNA glycosylase from Acinetobacter baumannii (strain SDF).